A 185-amino-acid chain; its full sequence is Elongation factor P (185 aa).

The protein belongs to the elongation factor P family.

The protein localises to the cytoplasm. Its pathway is protein biosynthesis; polypeptide chain elongation. Its function is as follows. Involved in peptide bond synthesis. Stimulates efficient translation and peptide-bond synthesis on native or reconstituted 70S ribosomes in vitro. Probably functions indirectly by altering the affinity of the ribosome for aminoacyl-tRNA, thus increasing their reactivity as acceptors for peptidyl transferase. The protein is Elongation factor P of Streptococcus pyogenes serotype M49 (strain NZ131).